The sequence spans 208 residues: Probable GTP-binding protein EngB (208 aa).

The EngB-type G domain maps to 18–187; it reads KQFEICVIGR…FALMKKVVIE (170 aa). GTP contacts are provided by residues 26 to 33, 52 to 56, 69 to 72, 135 to 138, and 166 to 168; these read GRSNVGKS, GRTQL, DLPG, NKVD, and VSA. Residues Ser-33 and Thr-54 each contribute to the Mg(2+) site.

It belongs to the TRAFAC class TrmE-Era-EngA-EngB-Septin-like GTPase superfamily. EngB GTPase family. It depends on Mg(2+) as a cofactor.

Functionally, necessary for normal cell division and for the maintenance of normal septation. In Ureaplasma urealyticum serovar 10 (strain ATCC 33699 / Western), this protein is Probable GTP-binding protein EngB.